Reading from the N-terminus, the 166-residue chain is Regulatory protein RecX (166 aa).

Belongs to the RecX family.

It localises to the cytoplasm. Modulates RecA activity. This chain is Regulatory protein RecX, found in Shigella boydii serotype 18 (strain CDC 3083-94 / BS512).